A 278-amino-acid chain; its full sequence is MSQQENKKMINVGVIGAGGRMGRMLIEAIQDNPQTALNAAIERQGSSLVGADAGEVAAIGRLEVQIVDDLKAVINDIDVLIDFSLPAATEQNMQVCAKHNVAMVIGTTGFNEQQEQVLAKASEQVAIVYAGNYSTGVNLSLKLLGMAAKAFGTDADVEIIEAHHKHKIDAPSGTAYMMAEAVAEARGQNLKEVVVYGREGQTGAREAGTIGIHAIRGGEIIGDHTVMFIADGEVVEITHRARARMTFAAGAVRAATWIVQQPVGQYNMQDVLGLNDYI.

NAD(+)-binding positions include 16–21 and Glu42; that span reads GAGGRM. NADP(+) is bound at residue Arg43. NAD(+) contacts are provided by residues 106–108 and 130–133; these read GTT and AGNY. His163 serves as the catalytic Proton donor/acceptor. His164 provides a ligand contact to (S)-2,3,4,5-tetrahydrodipicolinate. Lys167 serves as the catalytic Proton donor. 173-174 is a binding site for (S)-2,3,4,5-tetrahydrodipicolinate; that stretch reads GT.

This sequence belongs to the DapB family.

It is found in the cytoplasm. It catalyses the reaction (S)-2,3,4,5-tetrahydrodipicolinate + NAD(+) + H2O = (2S,4S)-4-hydroxy-2,3,4,5-tetrahydrodipicolinate + NADH + H(+). The catalysed reaction is (S)-2,3,4,5-tetrahydrodipicolinate + NADP(+) + H2O = (2S,4S)-4-hydroxy-2,3,4,5-tetrahydrodipicolinate + NADPH + H(+). The protein operates within amino-acid biosynthesis; L-lysine biosynthesis via DAP pathway; (S)-tetrahydrodipicolinate from L-aspartate: step 4/4. Its function is as follows. Catalyzes the conversion of 4-hydroxy-tetrahydrodipicolinate (HTPA) to tetrahydrodipicolinate. The sequence is that of 4-hydroxy-tetrahydrodipicolinate reductase from Psychrobacter arcticus (strain DSM 17307 / VKM B-2377 / 273-4).